A 232-amino-acid polypeptide reads, in one-letter code: Large ribosomal subunit protein uL1 (232 aa).

The protein belongs to the universal ribosomal protein uL1 family. Part of the 50S ribosomal subunit.

Its function is as follows. Binds directly to 23S rRNA. The L1 stalk is quite mobile in the ribosome, and is involved in E site tRNA release. In terms of biological role, protein L1 is also a translational repressor protein, it controls the translation of the L11 operon by binding to its mRNA. In Phocaeicola vulgatus (strain ATCC 8482 / DSM 1447 / JCM 5826 / CCUG 4940 / NBRC 14291 / NCTC 11154) (Bacteroides vulgatus), this protein is Large ribosomal subunit protein uL1.